The sequence spans 463 residues: uncharacterized protein (463 aa).

The TRAM domain occupies 9–67 (VLKKGQRFPLTIKRLGINGEGVGYFKRHVVFVPGALPGEEVVVEVTDVKPRFAEASIRK). Positions 80, 86, 89, and 169 each coordinate [4Fe-4S] cluster. Gln-293, Tyr-322, Asp-343, and Asp-391 together coordinate S-adenosyl-L-methionine. Cys-418 (nucleophile) is an active-site residue.

The protein belongs to the class I-like SAM-binding methyltransferase superfamily. RNA M5U methyltransferase family.

This is an uncharacterized protein from Halalkalibacterium halodurans (strain ATCC BAA-125 / DSM 18197 / FERM 7344 / JCM 9153 / C-125) (Bacillus halodurans).